The sequence spans 278 residues: Large ribosomal subunit protein uL2 (278 aa).

Residues 222–278 (GVVMNPIDHPHGGGEGRTSGGRHPVTPWGKPTKGKKTRSNKSTDKFILISRHKRKKK) are disordered.

The protein belongs to the universal ribosomal protein uL2 family. As to quaternary structure, part of the 50S ribosomal subunit. Forms a bridge to the 30S subunit in the 70S ribosome.

In terms of biological role, one of the primary rRNA binding proteins. Required for association of the 30S and 50S subunits to form the 70S ribosome, for tRNA binding and peptide bond formation. It has been suggested to have peptidyltransferase activity; this is somewhat controversial. Makes several contacts with the 16S rRNA in the 70S ribosome. This chain is Large ribosomal subunit protein uL2, found in Rhodopseudomonas palustris (strain ATCC BAA-98 / CGA009).